The chain runs to 29 residues: Prolamin alpha-1 (29 aa).

The sequence is that of Prolamin alpha-1 from Dactylis glomerata (Orchard grass).